A 180-amino-acid chain; its full sequence is ATP synthase subunit b (180 aa).

A helical membrane pass occupies residues 26 to 46 (IPLMLATLAALVISIFFLTYF).

Belongs to the ATPase B chain family. As to quaternary structure, F-type ATPases have 2 components, F(1) - the catalytic core - and F(0) - the membrane proton channel. F(1) has five subunits: alpha(3), beta(3), gamma(1), delta(1), epsilon(1). F(0) has three main subunits: a(1), b(2) and c(10-14). The alpha and beta chains form an alternating ring which encloses part of the gamma chain. F(1) is attached to F(0) by a central stalk formed by the gamma and epsilon chains, while a peripheral stalk is formed by the delta and b chains.

Its subcellular location is the cell membrane. F(1)F(0) ATP synthase produces ATP from ADP in the presence of a proton or sodium gradient. F-type ATPases consist of two structural domains, F(1) containing the extramembraneous catalytic core and F(0) containing the membrane proton channel, linked together by a central stalk and a peripheral stalk. During catalysis, ATP synthesis in the catalytic domain of F(1) is coupled via a rotary mechanism of the central stalk subunits to proton translocation. In terms of biological role, component of the F(0) channel, it forms part of the peripheral stalk, linking F(1) to F(0). This is ATP synthase subunit b from Mycoplasmopsis pulmonis (strain UAB CTIP) (Mycoplasma pulmonis).